Reading from the N-terminus, the 484-residue chain is 6-phosphogluconate dehydrogenase, decarboxylating (484 aa).

NADP(+) is bound by residues 10-15, 33-35, 75-77, and N103; these read GLAVMG, NRT, and IKA. Substrate contacts are provided by residues N103 and 129–131; that span reads SGG. Residue K183 is the Proton acceptor of the active site. Position 186 to 187 (186 to 187) interacts with substrate; the sequence is HN. E190 serves as the catalytic Proton donor. Positions 191, 260, 287, 448, and 454 each coordinate substrate.

Belongs to the 6-phosphogluconate dehydrogenase family. As to quaternary structure, homodimer.

The catalysed reaction is 6-phospho-D-gluconate + NADP(+) = D-ribulose 5-phosphate + CO2 + NADPH. It participates in carbohydrate degradation; pentose phosphate pathway; D-ribulose 5-phosphate from D-glucose 6-phosphate (oxidative stage): step 3/3. Its function is as follows. Catalyzes the oxidative decarboxylation of 6-phosphogluconate to ribulose 5-phosphate and CO(2), with concomitant reduction of NADP to NADPH. This chain is 6-phosphogluconate dehydrogenase, decarboxylating, found in Caenorhabditis elegans.